A 463-amino-acid polypeptide reads, in one-letter code: Asparagine--tRNA ligase (463 aa).

The protein belongs to the class-II aminoacyl-tRNA synthetase family. In terms of assembly, homodimer.

Its subcellular location is the cytoplasm. The catalysed reaction is tRNA(Asn) + L-asparagine + ATP = L-asparaginyl-tRNA(Asn) + AMP + diphosphate + H(+). This Clostridium botulinum (strain Langeland / NCTC 10281 / Type F) protein is Asparagine--tRNA ligase.